Reading from the N-terminus, the 440-residue chain is Sialyltransferase-like protein 2 (440 aa).

Residues 1–5 lie on the Cytoplasmic side of the membrane; it reads MKLLH. Residues 6 to 26 traverse the membrane as a helical; Signal-anchor for type II membrane protein segment; the sequence is LIFLLALTTGISAVLIYIIGV. At 27 to 440 the chain is on the lumenal side; it reads SNLYESNRFT…HGQLCITPAD (414 aa). N-linked (GlcNAc...) asparagine glycans are attached at residues Asn113 and Asn149.

Belongs to the glycosyltransferase 29 family.

It localises to the golgi apparatus membrane. May be involved in the transfer of 2-keto-3-deoxy-D-lyxo-heptulosaric acid (Dha) and/or 2-keto-3-deoxy-D-manno-octulosonic acid (Kdo) on the homogalacturonan backbone of rhamnogalacturonan-II. Required for efficient pollen grain germination and pollen tube elongation. Does not possess sialyltransferase activity in vitro. This Arabidopsis thaliana (Mouse-ear cress) protein is Sialyltransferase-like protein 2.